A 448-amino-acid polypeptide reads, in one-letter code: Cyclic dof factor 3 (448 aa).

The segment at 26–108 (AVTVEDDEED…DGKTLKKPTK (83 aa)) is disordered. A compositionally biased stretch (acidic residues) spans 29 to 39 (VEDDEEDDWSG). Basic and acidic residues predominate over residues 40 to 54 (GDDKSPEKVTPELSD). A compositionally biased stretch (low complexity) spans 55–69 (KNNNNCNDNSFNNSK). Residues 80–99 (STDQIESSDTPEDNQQTTPD) are compositionally biased toward polar residues. Residues 110–164 (LPCPRCKSMETKFCYYNNYNINQPRHFCKACQRYWTAGGTMRNVPVGAGRRKNKS) form a Dof-type zinc finger. Zn(2+)-binding residues include C112, C115, C137, and C140. Disordered regions lie at residues 243–269 (NGDDCSSGSSVTTSNNHSVDESRAQSG) and 332–370 (SSSPISQKCSNTNSPTLGKHPRDEGSSKKDNETERKQKA). 2 stretches are compositionally biased toward polar residues: residues 246 to 259 (DCSSGSSVTTSNNH) and 332 to 347 (SSSPISQKCSNTNSPT). Residues 351-368 (HPRDEGSSKKDNETERKQ) show a composition bias toward basic and acidic residues.

Interacts with ADO2 (via kelch repeats) and ADO3 (via kelch repeats). Expressed in the vasculature of cotyledons and hypocotyls, leaves and roots.

It localises to the nucleus. Transcription factor that binds specifically to a 5'-AA[AG]G-3' consensus core sequence. Regulates a photoperiodic flowering response. Transcriptional repressor of 'CONSTANS' expression. The protein is Cyclic dof factor 3 (CDF3) of Arabidopsis thaliana (Mouse-ear cress).